Reading from the N-terminus, the 243-residue chain is UPF0702 transmembrane protein YkjA (243 aa).

3 helical membrane-spanning segments follow: residues 3-23 (WMVW…YILF), 34-54 (MNNF…EPIL), and 58-78 (LPMS…MSKL).

It belongs to the UPF0702 family.

The protein resides in the cell membrane. The sequence is that of UPF0702 transmembrane protein YkjA (ykjA) from Bacillus subtilis (strain 168).